The following is a 560-amino-acid chain: Dihydroxy-acid dehydratase (560 aa).

Cys52 is a [2Fe-2S] cluster binding site. Asp84 lines the Mg(2+) pocket. Residue Cys125 participates in [2Fe-2S] cluster binding. The Mg(2+) site is built by Asp126 and Lys127. N6-carboxylysine is present on Lys127. Cys197 contacts [2Fe-2S] cluster. Glu448 contacts Mg(2+). The Proton acceptor role is filled by Ser474.

It belongs to the IlvD/Edd family. Homodimer. Requires [2Fe-2S] cluster as cofactor. It depends on Mg(2+) as a cofactor.

The catalysed reaction is (2R)-2,3-dihydroxy-3-methylbutanoate = 3-methyl-2-oxobutanoate + H2O. It carries out the reaction (2R,3R)-2,3-dihydroxy-3-methylpentanoate = (S)-3-methyl-2-oxopentanoate + H2O. It participates in amino-acid biosynthesis; L-isoleucine biosynthesis; L-isoleucine from 2-oxobutanoate: step 3/4. The protein operates within amino-acid biosynthesis; L-valine biosynthesis; L-valine from pyruvate: step 3/4. In terms of biological role, functions in the biosynthesis of branched-chain amino acids. Catalyzes the dehydration of (2R,3R)-2,3-dihydroxy-3-methylpentanoate (2,3-dihydroxy-3-methylvalerate) into 2-oxo-3-methylpentanoate (2-oxo-3-methylvalerate) and of (2R)-2,3-dihydroxy-3-methylbutanoate (2,3-dihydroxyisovalerate) into 2-oxo-3-methylbutanoate (2-oxoisovalerate), the penultimate precursor to L-isoleucine and L-valine, respectively. The polypeptide is Dihydroxy-acid dehydratase (Francisella tularensis subsp. novicida (strain U112)).